The following is a 215-amino-acid chain: MRLILLGPPGAGKGTQAKRVIEEFDIPHISTGDIFRKNIKEKTELGQKVEGLLAQGKLVPDELTIEIVWDRLDQEDCKNGFLLDGFPRTIPQAEALDEGLAKRGLKLDRVLNIDVDKDSLVKRLSGRRVCPSCGASYHIDNNPTKVDGICDACQTPVIQREDDKEETVLDRIKVYDSQTKPLVDFYNKQDLVFTVDGTLPIDEITNKLVTELKKG.

Gly-10–Thr-15 contacts ATP. The interval Ser-30–Val-59 is NMP. AMP-binding positions include Thr-31, Arg-36, Lys-57–Val-59, Gly-85–Arg-88, and Gln-92. The LID stretch occupies residues Gly-126–Asp-163. ATP is bound at residue Arg-127. Zn(2+)-binding residues include Cys-130 and Cys-133. Ser-136–Tyr-137 is an ATP binding site. Zn(2+) is bound by residues Cys-150 and Cys-153. The AMP site is built by Arg-160 and Arg-171. Residue Leu-199 participates in ATP binding.

The protein belongs to the adenylate kinase family. In terms of assembly, monomer.

The protein resides in the cytoplasm. The enzyme catalyses AMP + ATP = 2 ADP. The protein operates within purine metabolism; AMP biosynthesis via salvage pathway; AMP from ADP: step 1/1. In terms of biological role, catalyzes the reversible transfer of the terminal phosphate group between ATP and AMP. Plays an important role in cellular energy homeostasis and in adenine nucleotide metabolism. The protein is Adenylate kinase of Finegoldia magna (strain ATCC 29328 / DSM 20472 / WAL 2508) (Peptostreptococcus magnus).